A 468-amino-acid polypeptide reads, in one-letter code: Cysteine--tRNA ligase (468 aa).

Cys33 lines the Zn(2+) pocket. The short motif at 35 to 45 (ATVQGLPHIGH) is the 'HIGH' region element. Cys211, His236, and Glu240 together coordinate Zn(2+). The 'KMSKS' region signature appears at 267-271 (KMSKS). Residue Lys270 participates in ATP binding.

The protein belongs to the class-I aminoacyl-tRNA synthetase family. In terms of assembly, monomer. Zn(2+) is required as a cofactor.

Its subcellular location is the cytoplasm. It catalyses the reaction tRNA(Cys) + L-cysteine + ATP = L-cysteinyl-tRNA(Cys) + AMP + diphosphate. The polypeptide is Cysteine--tRNA ligase (Mycobacterium avium (strain 104)).